We begin with the raw amino-acid sequence, 424 residues long: MTTVVAFILMFGVLVSIHEWGHLIFAKRAGMLVREFAIGFGPKIFSFTKNETLYTIRLIPAGGYVRVAGEDPEIIELKPGHHIGLEFNQAGEVSKIIVNNKSKHPYARVIEVENVDLDHKLIIEGYELDDDENRLSFNVNEKAMFVMDERETQIAPYNRQFASKSTGKRAMQLFAGPMMNFVLAIAIFLILGIIQGVPVEEAKLGEIQPDTPAEQAGFQQDDVITQIGDQSISTWEEFTSIVRENPGQELDMVIQRNGESQDISVVPGEAEAVNEVGDPITIGQIGVYQGFEKDVLGTFVYGIERTYDTTTMIIQNLFMLVTGQVSIELLSGPVGIYDATDQVVQTGFSNFLLWTAMLSINLGIINLVPLPALDGGRLLFVGLEAVRGKPIAPEKEGIFHFVGFALLMLLMIVVTWNDIQRLFL.

Transmembrane regions (helical) follow at residues 5 to 25, 174 to 194, 317 to 337, 351 to 371, and 396 to 416; these read VAFI…HLIF, FAGP…LGII, LFML…VGIY, FLLW…VPLP, and EGIF…VVTW. Histidine 18 is a binding site for Zn(2+). Glutamate 19 is a catalytic residue. Residue histidine 22 coordinates Zn(2+). The PDZ domain occupies 184–269; sequence AIAIFLILGI…SQDISVVPGE (86 aa).

It belongs to the peptidase M50B family. It depends on Zn(2+) as a cofactor.

It is found in the cell membrane. In terms of biological role, is responsible for Site-2 cleavage of the RsiW anti-sigma factor. This results, after a third proteolytic step catalyzed by the ClpXP protease, in the release of SigW and the transcription activation of the genes under the control of the sigma-W factor. The polypeptide is Zinc metalloprotease RasP (rasP) (Oceanobacillus iheyensis (strain DSM 14371 / CIP 107618 / JCM 11309 / KCTC 3954 / HTE831)).